Reading from the N-terminus, the 296-residue chain is Galectin-3 (296 aa).

A compositionally biased stretch (polar residues) spans 1 to 11; it reads MADSFSLNDAL. Residues 1–150 are disordered; the sequence is MADSFSLNDA…PSAPGAYPAA (150 aa). Ala2 carries the N-acetylalanine modification. 2 positions are modified to phosphoserine; by CK1: Ser6 and Ser12. Low complexity-rich tracts occupy residues 12–31 and 38–47; these read SGSG…NQPA and GASYPGAYPG. 8 tandem repeats follow at residues 36–44, 45–53, 54–62, 63–71, 72–80, 81–89, 90–98, and 99–107. The interval 36–143 is 12 X 9 AA tandem repeats of Y-P-G-X(3)-P-G-[GAT]; sequence YPGASYPGAY…AYPPPGQPSA (108 aa). A compositionally biased stretch (pro residues) spans 48–120; sequence QAPPGGYPGQ…PTAPAYPGPT (73 aa). A 9; approximate repeat occupies 108 to 115; it reads YPGPTAPA. Residues 116–124 form repeat 10; the sequence is YPGPTAPGT. Positions 121-133 are enriched in low complexity; it reads APGTQPGQPSGPG. An 11; approximate repeat occupies 125–134; sequence QPGQPSGPGA. One copy of the 12; approximate repeat lies at 135 to 143; the sequence is YPPPGQPSA. A Galectin domain is found at 164 to 294; it reads YDLPLPGGVK…DIDLTSASYA (131 aa). 227 to 233 is a binding site for a beta-D-galactoside; it reads WGKEERQ. The Nuclear export signal motif lies at 272–287; sequence KNLPEISKLGISGDID.

As to quaternary structure, probably forms homo- or heterodimers. Interacts with DMBT1. Interacts with CD6 and ALCAM. Forms a complex with the ITGA3, ITGB1 and CSPG4. Interacts with LGALS3BP, LYPD3, ZFTRAF1 and UACA. Interacts with TRIM16; this interaction mediates autophagy of damage endomembranes. Interacts with cargo receptor TMED10; the interaction mediates the translocation from the cytoplasm into the ERGIC (endoplasmic reticulum-Golgi intermediate compartment) and thereby secretion. Interacts with and inhibits by binding NCR3/NKp30. The degree of phosphorylation is higher in the cytoplasmic form than in the nuclear form. In protein isolated from a canine kidney cell line, 90% of the phosphate was on Ser-6 and 10% was on Ser-12.

It is found in the cytoplasm. The protein resides in the nucleus. The protein localises to the secreted. Galactose-specific lectin which binds IgE. May mediate with the alpha-3, beta-1 integrin the stimulation by CSPG4 of endothelial cells migration. Together with DMBT1, required for terminal differentiation of columnar epithelial cells during early embryogenesis. In the nucleus: acts as a pre-mRNA splicing factor. Involved in acute inflammatory responses including neutrophil activation and adhesion, chemoattraction of monocytes macrophages, opsonization of apoptotic neutrophils, and activation of mast cells. Together with TRIM16, coordinates the recognition of membrane damage with mobilization of the core autophagy regulators ATG16L1 and BECN1 in response to damaged endomembranes. When secreted, interacts with NK cell-activating receptor NCR3/NKp30 acting as an inhibitory ligand which antagonizes NK cell attack. This is Galectin-3 (LGALS3) from Canis lupus familiaris (Dog).